A 182-amino-acid polypeptide reads, in one-letter code: UPF0397 protein BT9727_2423 (182 aa).

A run of 5 helical transmembrane segments spans residues 9 to 29 (VVAIGIGSALYGILGLWGFSI), 40 to 60 (AILTVFGALFGPVAGLLIGLI), 71 to 91 (WGIWWGWVISSGIIGFTMGFI), 114 to 134 (ITGLIGIVIAIIFAGAFDIIV), and 142 to 162 (IVIQVLGATIADVIVFLVLGL).

This sequence belongs to the UPF0397 family.

It localises to the cell membrane. The protein is UPF0397 protein BT9727_2423 of Bacillus thuringiensis subsp. konkukian (strain 97-27).